Consider the following 305-residue polypeptide: Short-chain dehydrogenase/reductase VdtF (305 aa).

Positions 28 and 98 each coordinate NADP(+). Residue Ser192 is the Proton donor of the active site. Tyr206, Lys210, and Thr241 together coordinate NADP(+). Tyr206 (proton acceptor) is an active-site residue. The active-site Lowers pKa of active site Tyr is the Lys210.

It belongs to the short-chain dehydrogenases/reductases (SDR) family.

It catalyses the reaction methyl 2-[(3S)-9,10-dihydroxy-7-methoxy-1-oxo-1H,3H,4H-naphtho[2,3-c]pyran-3-yl]acetate + AH2 = semiviriditoxin + A. It carries out the reaction 9,10-dihydroxy-7-methoxy-3-(2-oxopropyl)-1H-benzo[g]isochromen-1-one + AH2 = (3S)-9,10-dihydroxy-7-methoxy-3-(2-oxopropyl)-1H,3H,4H-naphtho[2,3-c]pyran-1-one + A. It functions in the pathway secondary metabolite biosynthesis. Its function is as follows. Short-chain dehydrogenase/reductase; part of the gene cluster that mediates the biosynthesis of viriditoxin, one of the 'classical' secondary metabolites produced by fungi and that has antibacterial activity. The first step is performed by the polyketide synthase VdtA which condenses one acetyl-CoA and 6 malonyl-CoA units to form the heptaketide monomer backbone of viriditoxin. The product of VdtA is then O-methylated on C7 by the O-methyltransferase VdtC. The O-methyl group is important for the stereoselective coupling of the monomers at the final step of viriditoxin biosynthesis. The short-chain dehydrogenase/reductase VdtF then acts as a stereospecific reductase converting the pyrone to dihydropyrone via the reduction of the C3-C4 double bond. The FAD-binding monooxygenase VdtE then converts the ketone group into a methyl-ester group to yield semi-viriditoxin. Finally, the laccase VdtB is involved in dimerization of 2 semi-viriditoxin molecules to yield the final viriditoxin. VdtB is responsible for the regioselective 6,6'-coupling of semi-viriditoxin, which yields (M)-viriditoxin and (P)-viriditoxin at a ratio of 1:2. The non-catalytic carboxylesterase-like protein VdtD affects the stereochemistical outcome of the coupling. The highly reducing polyketide synthase VdtX is not involved in viriditoxin synthesis, but might possibly play a role in the production of additional metabolites not identified yet. This is Short-chain dehydrogenase/reductase VdtF from Byssochlamys spectabilis (Paecilomyces variotii).